Reading from the N-terminus, the 216-residue chain is MOB kinase activator 3C (216 aa).

Residues Cys82, Cys87, His164, and His169 each contribute to the Zn(2+) site.

This sequence belongs to the MOB1/phocein family.

Functionally, may regulate the activity of kinases. This chain is MOB kinase activator 3C (Mob3c), found in Mus musculus (Mouse).